A 197-amino-acid chain; its full sequence is Autophagy-related protein 33 (197 aa).

3 helical membrane-spanning segments follow: residues 10 to 30 (GIAV…SLIT), 52 to 72 (AATA…FGAP), and 78 to 98 (PYLL…GCAS). A phosphoserine mark is found at Ser-127 and Ser-129. Residues 135 to 148 (EDNHASENTPRDGK) show a composition bias toward basic and acidic residues. The interval 135–154 (EDNHASENTPRDGKPAATTV) is disordered. A helical transmembrane segment spans residues 172–192 (LIAATAIAIVGFVQAVIGVYG).

It belongs to the ATG33 family.

It localises to the mitochondrion membrane. Its function is as follows. Involved in the selective degradation of mitochondria via autophagy during starvation and at post-log phase. This Saccharomyces cerevisiae (strain ATCC 204508 / S288c) (Baker's yeast) protein is Autophagy-related protein 33 (ATG33).